The following is a 253-amino-acid chain: uncharacterized protein (253 aa).

This is an uncharacterized protein from Mycobacterium bovis (strain ATCC BAA-935 / AF2122/97).